The sequence spans 689 residues: Transcription factor MYC2 (689 aa).

A JAZ-interaction domain region spans residues 94–172 (LQQRLQALID…VLRELNSLIS (79 aa)). Polar residues predominate over residues 316–349 (NTVQTNSVPSSNSNKQIAYGNENNHPSGNGQSCY). Disordered regions lie at residues 316–361 (NTVQ…PQQQ) and 420–519 (QSQF…EAER). Over residues 350–361 (NQQQQKNPPQQQ) the composition is skewed to low complexity. The span at 471–495 (DSEHSDLEASVVKEADSSRVVEPEK) shows a compositional bias: basic and acidic residues. The span at 496-505 (RPRKRGRKPA) shows a compositional bias: basic residues. Residues 506-519 (NGREEPLNHVEAER) show a composition bias toward basic and acidic residues. The basic motif; degenerate stretch occupies residues 509–522 (EEPLNHVEAERQRR). The 50-residue stretch at 509-558 (EEPLNHVEAERQRREKLNQRFYALRAVVPNVSKMDKASLLGDAISYINEL) folds into the bHLH domain. A helix-loop-helix motif region spans residues 523-558 (EKLNQRFYALRAVVPNVSKMDKASLLGDAISYINEL). Residues 563–602 (QNTESDKEDLKSQIEDLKKESRRPGPPPPPNQDLKMSSHT) form a disordered region. Basic and acidic residues predominate over residues 566 to 585 (ESDKEDLKSQIEDLKKESRR).

In terms of assembly, interacts (via N-terminus) with MED25. Interacts (via N-terminus) with JAZ7. MED25 and JAZ7 compete with each other to bind to MYC2. Interacts (via N-terminus) with MTB1. MTB1 and MED25 compete with each other to bind to MYC2. As to expression, expressed at low levels in roots, stems, leaves, flowers and fruits.

The protein localises to the nucleus. Functionally, transcriptional activator that binds to the G-box motif (5'-AACGTG-3') found in the promoter of the jasmonate-induced gene LAPA1. Acts as a negative regulator of blue light-mediated photomorphogenesis and positively regulates root growth. Promotes growth in response to the phytohormones abscisic acid (ABA) and jasmonate (JA). Binds to the G-box motif (5'-CACGTG-3') of the RBCS-3A gene promoter. Acts downstream of the jasmonate (JA) receptor to orchestrate JA-mediated activation of plant responses. Positively regulates both wound-responsive and pathogen-responsive genes through MYC2-targeted transcription factors (MTFs) involved in early response to JA. With JA2L forms a transcription module that regulates wounding-responsive genes. With ERF.C3 forms a transcription module that regulates pathogen-responsive genes. Plays a critical role in orchestrating JA-mediated defense gene expression during Botrytis cinerea infection. Negatively regulates defense responses to root-knot nematodes, potentially by mediating crosstalk among the hormones strigolactones, abscisic acid (ABA) and jasmonate (JA). Regulates the termination of JA-mediated defense responses by specifically binding the G-box (5'-CACATG-3') motifs in the promoters of MTB1, MTB2 and MTB3, which are transcription factors that negatively regulates JA signaling. May be involved in JA-induced chilling tolerance, possibly by ameliorating the antioxidant enzyme system of fruit and increasing proline and lycopene levels. In Solanum lycopersicum (Tomato), this protein is Transcription factor MYC2.